Consider the following 430-residue polypeptide: Trigger factor (430 aa).

The PPIase FKBP-type domain maps to 163-248 (GDTAVFDFAG…LHEVKTKQVP (86 aa)).

This sequence belongs to the FKBP-type PPIase family. Tig subfamily.

It is found in the cytoplasm. The enzyme catalyses [protein]-peptidylproline (omega=180) = [protein]-peptidylproline (omega=0). In terms of biological role, involved in protein export. Acts as a chaperone by maintaining the newly synthesized protein in an open conformation. Functions as a peptidyl-prolyl cis-trans isomerase. In Exiguobacterium sp. (strain ATCC BAA-1283 / AT1b), this protein is Trigger factor.